The sequence spans 426 residues: Serine--tRNA ligase (426 aa).

227 to 229 (TSE) lines the L-serine pocket. Residues 258-260 (RKE) and Val274 each bind ATP. Position 281 (Glu281) interacts with L-serine. Residue 345–348 (ELTS) coordinates ATP. Thr380 provides a ligand contact to L-serine.

This sequence belongs to the class-II aminoacyl-tRNA synthetase family. Type-1 seryl-tRNA synthetase subfamily. In terms of assembly, homodimer. The tRNA molecule binds across the dimer.

It localises to the cytoplasm. The enzyme catalyses tRNA(Ser) + L-serine + ATP = L-seryl-tRNA(Ser) + AMP + diphosphate + H(+). It carries out the reaction tRNA(Sec) + L-serine + ATP = L-seryl-tRNA(Sec) + AMP + diphosphate + H(+). Its pathway is aminoacyl-tRNA biosynthesis; selenocysteinyl-tRNA(Sec) biosynthesis; L-seryl-tRNA(Sec) from L-serine and tRNA(Sec): step 1/1. In terms of biological role, catalyzes the attachment of serine to tRNA(Ser). Is also able to aminoacylate tRNA(Sec) with serine, to form the misacylated tRNA L-seryl-tRNA(Sec), which will be further converted into selenocysteinyl-tRNA(Sec). The sequence is that of Serine--tRNA ligase from Clavibacter sepedonicus (Clavibacter michiganensis subsp. sepedonicus).